A 417-amino-acid chain; its full sequence is Imidazolonepropionase (417 aa).

Fe(3+) contacts are provided by His-80 and His-82. Residues His-80 and His-82 each coordinate Zn(2+). 4-imidazolone-5-propanoate is bound by residues Arg-89, Tyr-152, and His-187. Tyr-152 is a binding site for N-formimidoyl-L-glutamate. Position 252 (His-252) interacts with Fe(3+). His-252 is a Zn(2+) binding site. Residue Glu-255 coordinates 4-imidazolone-5-propanoate. Asp-326 contributes to the Fe(3+) binding site. Residue Asp-326 coordinates Zn(2+). The N-formimidoyl-L-glutamate site is built by Asn-328 and Gly-330. Residue Ser-331 participates in 4-imidazolone-5-propanoate binding.

Belongs to the metallo-dependent hydrolases superfamily. HutI family. Requires Zn(2+) as cofactor. Fe(3+) is required as a cofactor.

The protein localises to the cytoplasm. It carries out the reaction 4-imidazolone-5-propanoate + H2O = N-formimidoyl-L-glutamate. It participates in amino-acid degradation; L-histidine degradation into L-glutamate; N-formimidoyl-L-glutamate from L-histidine: step 3/3. Catalyzes the hydrolytic cleavage of the carbon-nitrogen bond in imidazolone-5-propanoate to yield N-formimidoyl-L-glutamate. It is the third step in the universal histidine degradation pathway. The chain is Imidazolonepropionase from Bacteroides fragilis (strain ATCC 25285 / DSM 2151 / CCUG 4856 / JCM 11019 / LMG 10263 / NCTC 9343 / Onslow / VPI 2553 / EN-2).